Here is a 354-residue protein sequence, read N- to C-terminus: NADH-quinone oxidoreductase subunit H (354 aa).

The next 8 membrane-spanning stretches (helical) occupy residues 25–45 (LVRI…LILW), 91–111 (WVYL…WAVI), 126–146 (LLYA…AGWA), 170–190 (MGFA…SDIV), 205–225 (FLSW…VSGI), 257–277 (LFFL…SILF), 290–310 (FIPG…VFIW), and 330–350 (VFLP…MSPL).

It belongs to the complex I subunit 1 family. In terms of assembly, NDH-1 is composed of 14 different subunits. Subunits NuoA, H, J, K, L, M, N constitute the membrane sector of the complex.

It localises to the cell inner membrane. It carries out the reaction a quinone + NADH + 5 H(+)(in) = a quinol + NAD(+) + 4 H(+)(out). Its function is as follows. NDH-1 shuttles electrons from NADH, via FMN and iron-sulfur (Fe-S) centers, to quinones in the respiratory chain. The immediate electron acceptor for the enzyme in this species is believed to be ubiquinone. Couples the redox reaction to proton translocation (for every two electrons transferred, four hydrogen ions are translocated across the cytoplasmic membrane), and thus conserves the redox energy in a proton gradient. This subunit may bind ubiquinone. This chain is NADH-quinone oxidoreductase subunit H, found in Paraburkholderia phymatum (strain DSM 17167 / CIP 108236 / LMG 21445 / STM815) (Burkholderia phymatum).